The following is a 439-amino-acid chain: Ribosomal protein uS12 methylthiotransferase RimO (439 aa).

One can recognise an MTTase N-terminal domain in the interval 7 to 119 (KQLCLISLGC…IDIMIAKKQN (113 aa)). [4Fe-4S] cluster contacts are provided by C16, C50, C82, C151, C155, and C158. The region spanning 137-368 (TGSSVHAYVK…ALKHQNHSFK (232 aa)) is the Radical SAM core domain.

It belongs to the methylthiotransferase family. RimO subfamily. [4Fe-4S] cluster serves as cofactor.

It is found in the cytoplasm. It carries out the reaction L-aspartate(89)-[ribosomal protein uS12]-hydrogen + (sulfur carrier)-SH + AH2 + 2 S-adenosyl-L-methionine = 3-methylsulfanyl-L-aspartate(89)-[ribosomal protein uS12]-hydrogen + (sulfur carrier)-H + 5'-deoxyadenosine + L-methionine + A + S-adenosyl-L-homocysteine + 2 H(+). In terms of biological role, catalyzes the methylthiolation of an aspartic acid residue of ribosomal protein uS12. The sequence is that of Ribosomal protein uS12 methylthiotransferase RimO from Helicobacter pylori (strain G27).